The chain runs to 717 residues: Glutamate--cysteine ligase (717 aa).

Residues 484-576 (SKTTEQRAAK…TDSDHTDTDD (93 aa)) form a disordered region. Composition is skewed to low complexity over residues 492–518 (AKAQ…NGNG) and 551–567 (GTTN…SNGT).

It belongs to the glutamate--cysteine ligase type 3 family.

It carries out the reaction L-cysteine + L-glutamate + ATP = gamma-L-glutamyl-L-cysteine + ADP + phosphate + H(+). The enzyme catalyses (2S)-2-aminobutanoate + L-glutamate + ATP = gamma-L-glutamyl-(2S)-2-aminobutanoate + ADP + phosphate + H(+). The protein operates within sulfur metabolism; glutathione biosynthesis; glutathione from L-cysteine and L-glutamate: step 1/2. Catalyzes the ATP-dependent ligation of L-glutamate and L-cysteine and participates in the first and rate-limiting step in glutathione biosynthesis. This Drosophila melanogaster (Fruit fly) protein is Glutamate--cysteine ligase.